Here is a 104-residue protein sequence, read N- to C-terminus: DNA-directed RNA polymerase subunit omega (104 aa).

The disordered stretch occupies residues 76-104 (IEEEKRRKEEEEKKIKEQIAKEKEDGEKI).

This sequence belongs to the RNA polymerase subunit omega family. As to quaternary structure, the RNAP catalytic core consists of 2 alpha, 1 beta, 1 beta' and 1 omega subunit. When a sigma factor is associated with the core the holoenzyme is formed, which can initiate transcription.

The catalysed reaction is RNA(n) + a ribonucleoside 5'-triphosphate = RNA(n+1) + diphosphate. In terms of biological role, promotes RNA polymerase assembly. Latches the N- and C-terminal regions of the beta' subunit thereby facilitating its interaction with the beta and alpha subunits. This is DNA-directed RNA polymerase subunit omega from Streptococcus pneumoniae (strain CGSP14).